The following is a 188-amino-acid chain: Transcription factor E (188 aa).

The HTH TFE/IIEalpha-type domain maps to 9–98 (DLEVLRDVTL…SWRLNLREVL (90 aa)).

The protein belongs to the TFE family. As to quaternary structure, monomer. Interaction with RNA polymerase subunits RpoF and RpoE is necessary for Tfe stimulatory transcription activity. Able to interact with Tbp and RNA polymerase in the absence of DNA promoter. Interacts both with the preinitiation and elongation complexes.

In terms of biological role, transcription factor that plays a role in the activation of archaeal genes transcribed by RNA polymerase. Facilitates transcription initiation by enhancing TATA-box recognition by TATA-box-binding protein (Tbp), and transcription factor B (Tfb) and RNA polymerase recruitment. Not absolutely required for transcription in vitro, but particularly important in cases where Tbp or Tfb function is not optimal. It dynamically alters the nucleic acid-binding properties of RNA polymerases by stabilizing the initiation complex and destabilizing elongation complexes. Seems to translocate with the RNA polymerase following initiation and acts by binding to the non template strand of the transcription bubble in elongation complexes. This is Transcription factor E from Methanopyrus kandleri (strain AV19 / DSM 6324 / JCM 9639 / NBRC 100938).